A 427-amino-acid polypeptide reads, in one-letter code: Tol-Pal system protein TolB (427 aa).

The N-terminal stretch at 1–23 (MKLLKRLVSVFAIVLAVGSNAFA) is a signal peptide.

The protein belongs to the TolB family. In terms of assembly, the Tol-Pal system is composed of five core proteins: the inner membrane proteins TolA, TolQ and TolR, the periplasmic protein TolB and the outer membrane protein Pal. They form a network linking the inner and outer membranes and the peptidoglycan layer.

It localises to the periplasm. Functionally, part of the Tol-Pal system, which plays a role in outer membrane invagination during cell division and is important for maintaining outer membrane integrity. The chain is Tol-Pal system protein TolB from Haemophilus influenzae (strain PittGG).